Here is a 369-residue protein sequence, read N- to C-terminus: Secondary metabolism regulator laeA (369 aa).

Residues 1-37 (MFGNGQTGQRLPAMASPPHDSYYSQSLASSRSRNNSD) are disordered. Positions 20–37 (DSYYSQSLASSRSRNNSD) are enriched in low complexity.

This sequence belongs to the methyltransferase superfamily. LaeA methyltransferase family. As to quaternary structure, component of the heterotrimeric velvet complex composed of laeA, veA and velB; VeA acting as a bridging protein between laeA and velB. Interacts directly with veA.

Its subcellular location is the nucleus. It catalyses the reaction L-methionyl-[protein] + S-adenosyl-L-methionine = S-methyl-L-methionyl-[protein] + S-adenosyl-L-homocysteine. Its function is as follows. Methyltransferase that performs automethylation. No other methyl-accepting substrate has been identified yet. Component of the velvet transcription factor complex that acts as a global regulator for secondary metabolite gene expression. Required for aflR expression and subsequent aflatoxin production. Negatively regulates veA expression. Controls conidiophore and conidial development. Required for hydrophobin production which plays a role in cell surface hydrophobicity and host defense escape. This is Secondary metabolism regulator laeA from Aspergillus flavus (strain ATCC 200026 / FGSC A1120 / IAM 13836 / NRRL 3357 / JCM 12722 / SRRC 167).